The following is a 138-amino-acid chain: ATP synthase epsilon chain (138 aa).

Belongs to the ATPase epsilon chain family. In terms of assembly, F-type ATPases have 2 components, CF(1) - the catalytic core - and CF(0) - the membrane proton channel. CF(1) has five subunits: alpha(3), beta(3), gamma(1), delta(1), epsilon(1). CF(0) has three main subunits: a, b and c.

The protein localises to the cell membrane. In terms of biological role, produces ATP from ADP in the presence of a proton gradient across the membrane. The chain is ATP synthase epsilon chain from Streptococcus equi subsp. equi (strain 4047).